Reading from the N-terminus, the 112-residue chain is MVPHEFVTTAYDLPGYRVTRNFGIVRGIVVRSRSILGTLGAGLQTMVGGNISIFSNLCEQTRSDAFELMIQHAGQLGANAVIGMQYDATEIMQGVTEVLAYGTAVEVVPASK.

This sequence belongs to the UPF0145 family.

This Solibacter usitatus (strain Ellin6076) protein is UPF0145 protein Acid_4599.